The chain runs to 367 residues: Dihydroxyacetone phosphate transaminase Cj1437c (367 aa).

Lys219 carries the N6-(pyridoxal phosphate)lysine modification.

It belongs to the class-II pyridoxal-phosphate-dependent aminotransferase family. The cofactor is pyridoxal 5'-phosphate.

It carries out the reaction dihydroxyacetone phosphate + L-glutamate = (S)-serinol phosphate + 2-oxoglutarate. Its pathway is capsule biogenesis; capsule polysaccharide biosynthesis. Functionally, pyridoxal phosphate (PLP)-dependent transaminase involved in the biosynthesis of amidated D-glucuronic acid structures found on the capsular polysaccharide (CPS) of C.jejuni. Catalyzes the transamination of dihydroxyacetone phosphate (DHAP) to (S)-serinol phosphate in the presence of L-glutamate. Less active with L-aspartate. No activity with dihydroxyacetone or L-alanine. This chain is Dihydroxyacetone phosphate transaminase Cj1437c, found in Campylobacter jejuni subsp. jejuni serotype O:2 (strain ATCC 700819 / NCTC 11168).